Here is a 122-residue protein sequence, read N- to C-terminus: Small ribosomal subunit protein uS12 (122 aa).

The tract at residues methionine 1–leucine 24 is disordered. Positions isoleucine 8–threonine 20 are enriched in basic residues. Aspartate 89 bears the 3-methylthioaspartic acid mark.

Belongs to the universal ribosomal protein uS12 family. In terms of assembly, part of the 30S ribosomal subunit. Contacts proteins S8 and S17. May interact with IF1 in the 30S initiation complex.

With S4 and S5 plays an important role in translational accuracy. Its function is as follows. Interacts with and stabilizes bases of the 16S rRNA that are involved in tRNA selection in the A site and with the mRNA backbone. Located at the interface of the 30S and 50S subunits, it traverses the body of the 30S subunit contacting proteins on the other side and probably holding the rRNA structure together. The combined cluster of proteins S8, S12 and S17 appears to hold together the shoulder and platform of the 30S subunit. The polypeptide is Small ribosomal subunit protein uS12 (Natranaerobius thermophilus (strain ATCC BAA-1301 / DSM 18059 / JW/NM-WN-LF)).